Consider the following 263-residue polypeptide: Cobalt-precorrin-6A reductase (263 aa).

This sequence belongs to the precorrin-6x reductase family.

It carries out the reaction Co-precorrin-6B + NAD(+) = Co-precorrin-6A + NADH + H(+). It functions in the pathway cofactor biosynthesis; adenosylcobalamin biosynthesis; cob(II)yrinate a,c-diamide from sirohydrochlorin (anaerobic route): step 7/10. Its function is as follows. Catalyzes the reduction of the macrocycle of cobalt-precorrin-6A to cobalt-precorrin-6B. In Salmonella typhimurium (strain LT2 / SGSC1412 / ATCC 700720), this protein is Cobalt-precorrin-6A reductase (cbiJ).